The primary structure comprises 489 residues: Pre-glycoprotein polyprotein GP complex (489 aa).

Residue G2 is the site of N-myristoyl glycine; by host attachment. At 2–17 (GQIVTFFQEVPHILEE) the chain is on the extracellular side. Residues 18 to 33 (VMNIVLMTLSILAILK) traverse the membrane as a helical segment. Residues 34–58 (GIYNVMTCGIIGLITFLFLCGRSCS) lie on the Cytoplasmic side of the membrane. C57 is a binding site for Zn(2+). Residues 59–430 (SIYKDNYEFF…QSTTPLGLVD (372 aa)) lie on the Extracellular side of the membrane. Residues N78, N88, N98, N108, N118, and N166 are each glycosylated (N-linked (GlcNAc...) asparagine; by host). Intrachain disulfides connect C85–C229, C117–C154, C179–C210, C277–C290, C299–C308, and C362–C383. An N-linked (GlcNAc...) asparagine; by host glycan is attached at N222. N-linked (GlcNAc...) asparagine; by host glycans are attached at residues N363, N371, N388, and N393. Residues 431–451 (LFVFSTSFYLISVFLHLIKIP) form a helical membrane-spanning segment. At 452–489 (THRHIKGKPCPKPHRLNHMAICSCGFYKQPGLPTQWKR) the chain is on the cytoplasmic side. Zn(2+) contacts are provided by H453, H455, C461, H465, C473, and C475.

The protein belongs to the arenaviridae GPC protein family. As to quaternary structure, interacts with glycoprotein G2. Part of the GP complex (GP-C) together with glycoprotein G1 and glycoprotein G2. The GP-complex interacts with protein Z, which interacts with ribonucleocapsid; these interactions may induce virion budding. In terms of assembly, homotrimer; disulfide-linked. In pre-fusion state, G1 homotrimers bind G2 homotrimers via ionic interactions. Part of the GP complex (GP-C) together with glycoprotein G2 and the stable signal peptide. The GP-complex interacts with protein Z, which interacts with ribonucleocapsid; these interactions may induce virion budding. Homotrimer. Interacts with the stable signal peptide. In pre-fusion state, G2 homotrimers bind G1 homotrimers via ionic interactions. Part of the GP complex (GP-C) together with glycoprotein G1 and the stable signal peptide. Acidification in the endosome triggers rearrangements, which ultimately leads to a 6 helix bundle formed by the two heptad repeat domains (HR1 and HR2) in post-fusion state. The GP-complex interacts with protein Z, which interacts with ribonucleocapsid; these interactions may induce virion budding. Post-translationally, specific enzymatic cleavages in vivo yield mature proteins. GP-C polyprotein is cleaved in the endoplasmic reticulum by the host protease MBTPS1. Only cleaved glycoprotein is incorporated into virions. The SSP remains stably associated with the GP complex following cleavage by signal peptidase and plays crucial roles in the trafficking of GP through the secretory pathway. In terms of processing, myristoylation is necessary for GP2-mediated fusion activity.

Its subcellular location is the virion membrane. The protein localises to the host endoplasmic reticulum membrane. It localises to the host Golgi apparatus membrane. The protein resides in the host cell membrane. Its function is as follows. Functions as a cleaved signal peptide that is retained as the third component of the GP complex (GP-C). Helps to stabilize the spike complex in its native conformation. The SSP is required for efficient glycoprotein expression, post-translational maturation cleavage of G1 and G2, glycoprotein transport to the cell surface plasma membrane, formation of infectious virus particles, and acid pH-dependent glycoprotein-mediated cell fusion. In terms of biological role, forms the virion spikes together with glycoprotein G2. The glycoprotein spike trimers are connected to the underlying matrix. Interacts with the host receptor leading to virus endocytosis. Forms the virion spikes together with glycoprotein G1. The glycoprotein spike trimers are connected to the underlying matrix. Class I viral fusion protein that directs fusion of viral and host endosomal membranes, leading to delivery of the nucleocapsid into the cytoplasm. Membrane fusion is mediated by irreversible conformational changes induced by acidification. The protein is Pre-glycoprotein polyprotein GP complex of Mastomys natalensis (African soft-furred rat).